Here is a 129-residue protein sequence, read N- to C-terminus: Glycine cleavage system H protein (129 aa).

A Lipoyl-binding domain is found at 24–106; that stretch reads LVRVGISAFA…HGEGWLLVLR (83 aa). Lys-65 is subject to N6-lipoyllysine.

Belongs to the GcvH family. As to quaternary structure, the glycine cleavage system is composed of four proteins: P, T, L and H. (R)-lipoate is required as a cofactor.

The glycine cleavage system catalyzes the degradation of glycine. The H protein shuttles the methylamine group of glycine from the P protein to the T protein. In Synechococcus sp. (strain CC9605), this protein is Glycine cleavage system H protein.